The chain runs to 478 residues: uncharacterized protein (478 aa).

An N-terminal signal peptide occupies residues methionine 1–alanine 19. Topologically, residues serine 20–glutamine 214 are lumenal. A helical transmembrane segment spans residues isoleucine 215–isoleucine 235. Over cysteine 236 to lysine 240 the chain is Cytoplasmic. A helical transmembrane segment spans residues leucine 241 to valine 261. Over lysine 262 to aspartate 289 the chain is Lumenal. Residues glycine 290–isoleucine 310 traverse the membrane as a helical segment. At arginine 311–methionine 317 the chain is on the cytoplasmic side. The helical transmembrane segment at valine 318–valine 338 threads the bilayer. Over tyrosine 339–valine 356 the chain is Lumenal. The chain crosses the membrane as a helical span at residues tryptophan 357–phenylalanine 377. Residues arginine 378–tryptophan 391 lie on the Cytoplasmic side of the membrane. The chain crosses the membrane as a helical span at residues asparagine 392–phenylalanine 412. Topologically, residues aspartate 413–glutamate 427 are lumenal. The helical transmembrane segment at tyrosine 428–tyrosine 448 threads the bilayer. Residues serine 449 to phenylalanine 478 are Cytoplasmic-facing.

The protein resides in the endoplasmic reticulum membrane. The protein localises to the golgi apparatus membrane. This is an uncharacterized protein from Schizosaccharomyces pombe (strain 972 / ATCC 24843) (Fission yeast).